The following is a 201-amino-acid chain: Ribonuclease HII (201 aa).

Positions 12-201 (DLVAGVDEVG…VRELLDASVE (190 aa)) constitute an RNase H type-2 domain. A divalent metal cation contacts are provided by Asp-18, Glu-19, and Asp-110.

The protein belongs to the RNase HII family. Mn(2+) is required as a cofactor. Mg(2+) serves as cofactor.

It localises to the cytoplasm. It carries out the reaction Endonucleolytic cleavage to 5'-phosphomonoester.. In terms of biological role, endonuclease that specifically degrades the RNA of RNA-DNA hybrids. This chain is Ribonuclease HII, found in Pseudomonas paraeruginosa (strain DSM 24068 / PA7) (Pseudomonas aeruginosa (strain PA7)).